The chain runs to 146 residues: Basic phospholipase A2 73 (146 aa).

The first 19 residues, Met-1 to Ala-19, serve as a signal peptide directing secretion. The propeptide occupies Ala-20–Leu-27. 7 cysteine pairs are disulfide-bonded: Cys-38–Cys-98, Cys-54–Cys-145, Cys-56–Cys-72, Cys-71–Cys-126, Cys-78–Cys-119, Cys-87–Cys-112, and Cys-105–Cys-117. Ca(2+)-binding residues include Tyr-55, Gly-57, and Gly-59. Residue His-75 is part of the active site. Asp-76 lines the Ca(2+) pocket. Asp-120 is a catalytic residue.

It belongs to the phospholipase A2 family. Group I subfamily. D49 sub-subfamily. Ca(2+) serves as cofactor. Expressed by the venom gland.

It is found in the secreted. It catalyses the reaction a 1,2-diacyl-sn-glycero-3-phosphocholine + H2O = a 1-acyl-sn-glycero-3-phosphocholine + a fatty acid + H(+). Its function is as follows. Snake venom phospholipase A2 (PLA2) that inhibits neuromuscular transmission by blocking acetylcholine release from the nerve termini. PLA2 catalyzes the calcium-dependent hydrolysis of the 2-acyl groups in 3-sn-phosphoglycerides. This chain is Basic phospholipase A2 73, found in Hydrophis hardwickii (Hardwick's spine-bellied seasnake).